Consider the following 435-residue polypeptide: Glutamate-1-semialdehyde 2,1-aminomutase (435 aa).

The residue at position 266 (lysine 266) is an N6-(pyridoxal phosphate)lysine.

This sequence belongs to the class-III pyridoxal-phosphate-dependent aminotransferase family. HemL subfamily. In terms of assembly, homodimer. Pyridoxal 5'-phosphate is required as a cofactor.

It localises to the cytoplasm. It catalyses the reaction (S)-4-amino-5-oxopentanoate = 5-aminolevulinate. It functions in the pathway porphyrin-containing compound metabolism; protoporphyrin-IX biosynthesis; 5-aminolevulinate from L-glutamyl-tRNA(Glu): step 2/2. This chain is Glutamate-1-semialdehyde 2,1-aminomutase, found in Coxiella burnetii (strain CbuG_Q212) (Coxiella burnetii (strain Q212)).